A 414-amino-acid chain; its full sequence is Probable protein phosphatase 2C 80 (414 aa).

One can recognise a PPM-type phosphatase domain in the interval 174–411; sequence SCYLPHPEKE…DDITAVVSYV (238 aa). 4 residues coordinate Mn(2+): D204, G205, D336, and D402.

Belongs to the PP2C family. Requires Mg(2+) as cofactor. It depends on Mn(2+) as a cofactor.

It catalyses the reaction O-phospho-L-seryl-[protein] + H2O = L-seryl-[protein] + phosphate. It carries out the reaction O-phospho-L-threonyl-[protein] + H2O = L-threonyl-[protein] + phosphate. The polypeptide is Probable protein phosphatase 2C 80 (Arabidopsis thaliana (Mouse-ear cress)).